The following is a 504-amino-acid chain: Lysine--tRNA ligase (504 aa).

A 'HIGH' region motif is present at residues 23–31 (PSGPIHIGN).

Belongs to the class-I aminoacyl-tRNA synthetase family.

The protein resides in the cytoplasm. It catalyses the reaction tRNA(Lys) + L-lysine + ATP = L-lysyl-tRNA(Lys) + AMP + diphosphate. The sequence is that of Lysine--tRNA ligase from Picrophilus torridus (strain ATCC 700027 / DSM 9790 / JCM 10055 / NBRC 100828 / KAW 2/3).